Reading from the N-terminus, the 264-residue chain is Aminoglycoside 3'-phosphotransferase (264 aa).

Residue Asp190 is the Proton acceptor of the active site.

The protein belongs to the aminoglycoside phosphotransferase family.

The enzyme catalyses kanamycin A + ATP = kanamycin 3'-phosphate + ADP + H(+). Functionally, resistance to kanamycin and structurally-related aminoglycosides, including amikacin. The polypeptide is Aminoglycoside 3'-phosphotransferase (aphA) (Enterococcus faecalis (Streptococcus faecalis)).